Reading from the N-terminus, the 203-residue chain is Ribonuclease HII (203 aa).

The region spanning 14-203 (GVIAGVDEVG…ILNSTKRALL (190 aa)) is the RNase H type-2 domain. Asp20, Glu21, and Asp112 together coordinate a divalent metal cation.

Belongs to the RNase HII family. Requires Mn(2+) as cofactor. Mg(2+) serves as cofactor.

It is found in the cytoplasm. It catalyses the reaction Endonucleolytic cleavage to 5'-phosphomonoester.. Functionally, endonuclease that specifically degrades the RNA of RNA-DNA hybrids. This Wolbachia sp. subsp. Brugia malayi (strain TRS) protein is Ribonuclease HII.